The primary structure comprises 630 residues: UvrABC system protein C (630 aa).

Residues 18–97 form the GIY-YIG domain; it reads TQSGVYLMKN…IKKHRPKYNI (80 aa). The 36-residue stretch at 207-242 folds into the UVR domain; the sequence is KKVIKSMTEKMMGAADEEKFEVAARLRDSIEAIKAI.

It belongs to the UvrC family. In terms of assembly, interacts with UvrB in an incision complex.

It is found in the cytoplasm. Its function is as follows. The UvrABC repair system catalyzes the recognition and processing of DNA lesions. UvrC both incises the 5' and 3' sides of the lesion. The N-terminal half is responsible for the 3' incision and the C-terminal half is responsible for the 5' incision. The chain is UvrABC system protein C from Bdellovibrio bacteriovorus (strain ATCC 15356 / DSM 50701 / NCIMB 9529 / HD100).